A 161-amino-acid chain; its full sequence is Large ribosomal subunit protein uL15 (161 aa).

Residues 1 to 43 (MKLSEIADNVGSRKKRMRIGRGIGSGKGKTGGRGGKGQTARSG) are disordered. A compositionally biased stretch (gly residues) spans 21-37 (RGIGSGKGKTGGRGGKG).

Part of the 50S ribosomal subunit.

Functionally, binds to the 23S rRNA. This Rhodopseudomonas palustris (strain ATCC BAA-98 / CGA009) protein is Large ribosomal subunit protein uL15.